The sequence spans 102 residues: Sulfur globule protein CV3 (102 aa).

The first 25 residues, 1-25, serve as a signal peptide directing secretion; the sequence is MTMKRLLLVSTLAGASALATLPANA.

The protein envelope of the sulfur globules is composed of the three different proteins CV1, CV2 and CV3.

In terms of biological role, structural protein of the sulfur globules, which are intracellular globules that serve for sulfur storage in purple sulfur bacteria. The polypeptide is Sulfur globule protein CV3 (sgpC) (Allochromatium vinosum (strain ATCC 17899 / DSM 180 / NBRC 103801 / NCIMB 10441 / D) (Chromatium vinosum)).